The following is a 185-amino-acid chain: Ribosome-recycling factor (185 aa).

The protein belongs to the RRF family.

The protein resides in the cytoplasm. Responsible for the release of ribosomes from messenger RNA at the termination of protein biosynthesis. May increase the efficiency of translation by recycling ribosomes from one round of translation to another. The sequence is that of Ribosome-recycling factor from Parafrankia sp. (strain EAN1pec).